Consider the following 516-residue polypeptide: MNVFFMFSLLFLAALESCADDKNPLEEEFFEADYEEFLLIAKNGLQQTSNPKRVVIVGAGMSGLSAAYVLAKTGHEVILLEASERVGGRVSTYRNDQEGWYANLGPMRLPERHRIVREYIRKFGLQLNEFSQENENAWYFIKNIRKRVGEVNKDPGVLEYPVKPSEKGKSAPQLYRDSLQKIIEEYGRSNCSYILNKYDTYSTKDYLIKEGNLSPGAVDMVGDLLNEDSGYYVSFIESLKPDDIFAYENRFDEIVGGFDKLPTSMYQAIQEKVRLNVRVIKIQQDVKEVTVTYQTPAKNLSYVTADYVIVCTTSGAARRIKFEPPLPLKKAHALRSVHYRSGTKIFLTCTKKFWEDDGIHGGKSITDRPSRLIHYPNHNFPNGIGVLVIFTIADDADFFLALDNKTIADIVIHDLSLIHQLPKEKIRDLCYVSMIQKWSLDKYAMGGITTFTPYQFQHFSEALTAPVDRIYFAGEYTAQAHGWIDSTIKSGLTAARDVNRASENPSGIHLSNDNEL.

Residues 1-18 (MNVFFMFSLLFLAALESC) form the signal peptide. FAD contacts are provided by residues 61-62 (MS), 81-82 (EA), arginine 89, and 105-108 (GPMR). Arginine 108 contacts substrate. N-linked (GlcNAc...) asparagine glycosylation occurs at asparagine 190. Valine 279 lines the FAD pocket. N-linked (GlcNAc...) asparagine glycosylation is found at asparagine 299 and asparagine 404. Cysteine 349 and cysteine 430 are disulfide-bonded. Residues glutamate 475 and 482–487 (GWIDST) contribute to the FAD site. A substrate-binding site is contributed by 482 to 483 (GW).

This sequence belongs to the flavin monoamine oxidase family. FIG1 subfamily. Homodimer; non-covalently linked. FAD is required as a cofactor. N-glycosylated (14%). The enzymatic activity remains unchanged after deglycosylation. Expressed by the venom gland.

The protein resides in the secreted. It catalyses the reaction an L-alpha-amino acid + O2 + H2O = a 2-oxocarboxylate + H2O2 + NH4(+). The enzyme catalyses L-leucine + O2 + H2O = 4-methyl-2-oxopentanoate + H2O2 + NH4(+). The catalysed reaction is L-phenylalanine + O2 + H2O = 3-phenylpyruvate + H2O2 + NH4(+). It carries out the reaction L-tryptophan + O2 + H2O = indole-3-pyruvate + H2O2 + NH4(+). It catalyses the reaction L-methionine + O2 + H2O = 4-methylsulfanyl-2-oxobutanoate + H2O2 + NH4(+). The enzyme catalyses L-isoleucine + O2 + H2O = (S)-3-methyl-2-oxopentanoate + H2O2 + NH4(+). Its activity is regulated as follows. Inhibited by the substrate analog N-acetyl tryptophan. Catalyzes an oxidative deamination of predominantly hydrophobic and aromatic L-amino acids, thus producing hydrogen peroxide that may contribute to the diverse toxic effects of this enzyme. Is highly active on L-Met&gt;L-Leu&gt;L-Phe&gt;L-Trp=L-Ile. Binds to the cell surface and enables the production of highly localized concentration of hydrogen peroxide in or near the binding interfaces. Does not bind to phospholipids. Induces platelet-rich plasma aggregation, shows cytotoxic effects on some cancer cell lines (B16-F10 (mouse melanoma), PC12 (rat pheochromocytoma), MCF-7 and MDA-MB-231 (human breast carcinoma)) and shows antibacterial activities against both Gram-positive and Gram-negative bacteria. Also exhibits hemorrhage and edema. Does not show cytotoxicity on erythrocytes and peripheral blood mononuclear cells. Its effect on platelets is controversial, since it either induces aggregation or inhibits agonist-induced aggregation. These different effects are probably due to different experimental conditions. The sequence is that of L-amino acid oxidase from Cerastes cerastes (Horned desert viper).